The primary structure comprises 88 residues: MLNTKFDELMEFPCAFPFKVVGDAHETLTDRVVAVVQKHAPGDYSPTVKASSKGSYYSVTIRVTVTSKDHIETLYTELANIEGVRRVL.

Belongs to the UPF0250 family.

In Shewanella oneidensis (strain ATCC 700550 / JCM 31522 / CIP 106686 / LMG 19005 / NCIMB 14063 / MR-1), this protein is UPF0250 protein SO_1163.